Here is a 261-residue protein sequence, read N- to C-terminus: Probable 6-phosphogluconolactonase 4 (261 aa).

The protein belongs to the glucosamine/galactosamine-6-phosphate isomerase family. 6-phosphogluconolactonase subfamily.

Its subcellular location is the cytoplasm. It is found in the cytosol. The enzyme catalyses 6-phospho-D-glucono-1,5-lactone + H2O = 6-phospho-D-gluconate + H(+). It functions in the pathway carbohydrate degradation; pentose phosphate pathway; D-ribulose 5-phosphate from D-glucose 6-phosphate (oxidative stage): step 2/3. Catalyzes the hydrolysis of 6-phosphogluconolactone to 6-phosphogluconate. This Arabidopsis thaliana (Mouse-ear cress) protein is Probable 6-phosphogluconolactonase 4.